The chain runs to 247 residues: UPF0280 protein MmarC7_0482 (247 aa).

The protein belongs to the UPF0280 family.

This Methanococcus maripaludis (strain C7 / ATCC BAA-1331) protein is UPF0280 protein MmarC7_0482.